The sequence spans 331 residues: Adenosine deaminase (331 aa).

Residues histidine 12 and histidine 14 each coordinate Zn(2+). The substrate site is built by histidine 14, aspartate 16, and glycine 170. Histidine 197 lines the Zn(2+) pocket. Catalysis depends on glutamate 200, which acts as the Proton donor. Zn(2+) is bound at residue aspartate 278.

It belongs to the metallo-dependent hydrolases superfamily. Adenosine and AMP deaminases family. Adenosine deaminase subfamily. Zn(2+) is required as a cofactor.

It carries out the reaction adenosine + H2O + H(+) = inosine + NH4(+). The enzyme catalyses 2'-deoxyadenosine + H2O + H(+) = 2'-deoxyinosine + NH4(+). In terms of biological role, catalyzes the hydrolytic deamination of adenosine and 2-deoxyadenosine. This chain is Adenosine deaminase, found in Shewanella woodyi (strain ATCC 51908 / MS32).